Reading from the N-terminus, the 214-residue chain is Small ribosomal subunit protein uS3 (214 aa).

The KH type-2 domain maps to I39–K107.

The protein belongs to the universal ribosomal protein uS3 family. In terms of assembly, part of the 30S ribosomal subunit. Forms a tight complex with proteins S10 and S14.

Binds the lower part of the 30S subunit head. Binds mRNA in the 70S ribosome, positioning it for translation. This is Small ribosomal subunit protein uS3 from Protochlamydia amoebophila (strain UWE25).